The chain runs to 267 residues: Undecaprenyl-diphosphatase (267 aa).

8 consecutive transmembrane segments (helical) span residues 1–21, 40–60, 83–103, 111–131, 144–164, 189–209, 219–239, and 245–265; these read MTLFHLILVAAIQGLTEFLPV, GLAIDVAVHVGSLLAVILYFW, AFLALCLIIATIPVMIAGLII, MMRSVAVIGWTMLGFGLVLYW, GWTLKDAFLMGLAQILSLIPG, AMLMSIPTIIASGAVLGADVI, DGALAAALAFVSALLALALMM, and VSFTPYVVYRVILGLILLVYA.

The protein belongs to the UppP family.

The protein localises to the cell inner membrane. It carries out the reaction di-trans,octa-cis-undecaprenyl diphosphate + H2O = di-trans,octa-cis-undecaprenyl phosphate + phosphate + H(+). In terms of biological role, catalyzes the dephosphorylation of undecaprenyl diphosphate (UPP). Confers resistance to bacitracin. The chain is Undecaprenyl-diphosphatase from Roseobacter denitrificans (strain ATCC 33942 / OCh 114) (Erythrobacter sp. (strain OCh 114)).